The primary structure comprises 40 residues: Photosystem II reaction center protein J (40 aa).

The helical transmembrane segment at Ile-8–Phe-28 threads the bilayer.

This sequence belongs to the PsbJ family. In terms of assembly, PSII is composed of 1 copy each of membrane proteins PsbA, PsbB, PsbC, PsbD, PsbE, PsbF, PsbH, PsbI, PsbJ, PsbK, PsbL, PsbM, PsbT, PsbX, PsbY, PsbZ, Psb30/Ycf12, at least 3 peripheral proteins of the oxygen-evolving complex and a large number of cofactors. It forms dimeric complexes.

It localises to the plastid. The protein resides in the chloroplast thylakoid membrane. One of the components of the core complex of photosystem II (PSII). PSII is a light-driven water:plastoquinone oxidoreductase that uses light energy to abstract electrons from H(2)O, generating O(2) and a proton gradient subsequently used for ATP formation. It consists of a core antenna complex that captures photons, and an electron transfer chain that converts photonic excitation into a charge separation. The sequence is that of Photosystem II reaction center protein J from Coffea arabica (Arabian coffee).